The following is a 281-amino-acid chain: Pantothenate synthetase (281 aa).

31–38 serves as a coordination point for ATP; sequence MGALHDGH. Histidine 38 acts as the Proton donor in catalysis. Glutamine 62 lines the (R)-pantoate pocket. Position 62 (glutamine 62) interacts with beta-alanine. 148–151 provides a ligand contact to ATP; that stretch reads GQKD. Residue glutamine 154 participates in (R)-pantoate binding. ATP contacts are provided by residues valine 177 and 185 to 188; that span reads LSSR.

Belongs to the pantothenate synthetase family. As to quaternary structure, homodimer.

It localises to the cytoplasm. It catalyses the reaction (R)-pantoate + beta-alanine + ATP = (R)-pantothenate + AMP + diphosphate + H(+). The protein operates within cofactor biosynthesis; (R)-pantothenate biosynthesis; (R)-pantothenate from (R)-pantoate and beta-alanine: step 1/1. Catalyzes the condensation of pantoate with beta-alanine in an ATP-dependent reaction via a pantoyl-adenylate intermediate. The chain is Pantothenate synthetase from Dinoroseobacter shibae (strain DSM 16493 / NCIMB 14021 / DFL 12).